The chain runs to 358 residues: MRKIIHIDMDCYFAAVEMRDFPEYRGKPLAVGGSSDRRGVISTCSYEARKFGVRSAMATAYAFKLCPDLILVPGRMQVYKEVSLQIREIFSRYTPLIEPLSLDEAYLDVSECQQYKGSATLIAQAIRRDILAETGLTASAGIAPVKFLAKVASDLNKPNGQYVITPETLPDFVKTLSLRKIPGVGKVTAEKLSSLGLNTCGDVQAYSKPELLARFGKFGGVLIERSQGIDERGISADRERKSVGVETTLAKDIYSLEQCQQVMPGLIQELALRLSRSAKERKIHKQVVKLKFNDFKQTTIEHRSDEVSIVMFYDLLAQAMARQEGRGIRLLGISVGLADSILAVPEIPNAQTQLDLAL.

Residues 4-185 (IIHIDMDCYF…LSLRKIPGVG (182 aa)) form the UmuC domain. Asp-8 and Asp-103 together coordinate Mg(2+). Residue Glu-104 is part of the active site.

This sequence belongs to the DNA polymerase type-Y family. In terms of assembly, monomer. It depends on Mg(2+) as a cofactor.

The protein localises to the cytoplasm. The catalysed reaction is DNA(n) + a 2'-deoxyribonucleoside 5'-triphosphate = DNA(n+1) + diphosphate. Its function is as follows. Poorly processive, error-prone DNA polymerase involved in untargeted mutagenesis. Copies undamaged DNA at stalled replication forks, which arise in vivo from mismatched or misaligned primer ends. These misaligned primers can be extended by PolIV. Exhibits no 3'-5' exonuclease (proofreading) activity. May be involved in translesional synthesis, in conjunction with the beta clamp from PolIII. The sequence is that of DNA polymerase IV from Shewanella baltica (strain OS195).